We begin with the raw amino-acid sequence, 228 residues long: Ribosomal RNA small subunit methyltransferase G (228 aa).

Residues Gly-89, Leu-94, 140 to 141, and Arg-159 contribute to the S-adenosyl-L-methionine site; that span reads VE.

This sequence belongs to the methyltransferase superfamily. RNA methyltransferase RsmG family.

It is found in the cytoplasm. The enzyme catalyses guanosine(527) in 16S rRNA + S-adenosyl-L-methionine = N(7)-methylguanosine(527) in 16S rRNA + S-adenosyl-L-homocysteine. Specifically methylates the N7 position of guanine in position 527 of 16S rRNA. This chain is Ribosomal RNA small subunit methyltransferase G, found in Burkholderia ambifaria (strain ATCC BAA-244 / DSM 16087 / CCUG 44356 / LMG 19182 / AMMD) (Burkholderia cepacia (strain AMMD)).